The chain runs to 345 residues: Dihydroorotase (345 aa).

Positions 14 and 16 each coordinate Zn(2+). Substrate is bound by residues 16–18 (HLR) and N42. Zn(2+)-binding residues include K100, H137, and H175. K100 is modified (N6-carboxylysine). H137 provides a ligand contact to substrate. L220 contributes to the substrate binding site. Residue D248 coordinates Zn(2+). D248 is an active-site residue. H252 and A264 together coordinate substrate.

The protein belongs to the metallo-dependent hydrolases superfamily. DHOase family. Class II DHOase subfamily. As to quaternary structure, homodimer. It depends on Zn(2+) as a cofactor.

The catalysed reaction is (S)-dihydroorotate + H2O = N-carbamoyl-L-aspartate + H(+). It functions in the pathway pyrimidine metabolism; UMP biosynthesis via de novo pathway; (S)-dihydroorotate from bicarbonate: step 3/3. Its function is as follows. Catalyzes the reversible cyclization of carbamoyl aspartate to dihydroorotate. The sequence is that of Dihydroorotase from Methylobacillus flagellatus (strain ATCC 51484 / DSM 6875 / VKM B-1610 / KT).